The primary structure comprises 209 residues: UPF0174 protein jhp_1493 (209 aa).

Belongs to the UPF0174 family.

This Helicobacter pylori (strain J99 / ATCC 700824) (Campylobacter pylori J99) protein is UPF0174 protein jhp_1493.